The following is a 198-amino-acid chain: dCTP deaminase (198 aa).

DCTP-binding positions include 110-115 (RSSLAR), Asp128, 136-138 (VLE), Tyr171, Lys178, and Gln182. The Proton donor/acceptor role is filled by Glu138. Positions 168–198 (ARPYNKREDAKYRDQKGAVASRISQDEKVNK) are disordered. Basic and acidic residues predominate over residues 172–183 (NKREDAKYRDQK).

This sequence belongs to the dCTP deaminase family. Homotrimer.

The enzyme catalyses dCTP + H2O + H(+) = dUTP + NH4(+). It functions in the pathway pyrimidine metabolism; dUMP biosynthesis; dUMP from dCTP (dUTP route): step 1/2. Functionally, catalyzes the deamination of dCTP to dUTP. This chain is dCTP deaminase, found in Colwellia psychrerythraea (strain 34H / ATCC BAA-681) (Vibrio psychroerythus).